Consider the following 83-residue polypeptide: Transmembrane protein EP84R (83 aa).

2 consecutive transmembrane segments (helical) span residues 31–51 and 59–79; these read IIGV…IIIL and AGSI…FLIY.

The protein belongs to the asfivirus EP84R family.

The protein localises to the virion membrane. This Ornithodoros (relapsing fever ticks) protein is Transmembrane protein EP84R.